Here is a 455-residue protein sequence, read N- to C-terminus: GTPase Der (455 aa).

EngA-type G domains lie at 4–169 (PVVA…PPKD) and 178–353 (IQMA…EQHR). GTP is bound by residues 10 to 17 (GRPNVGKS), 57 to 61 (DTGGL), 120 to 123 (NKCE), 184 to 191 (GRPNVGKS), 231 to 235 (DTAGI), and 296 to 299 (NKWD). The KH-like domain occupies 354–439 (RRVSTSVVNE…PLRLFWRGKQ (86 aa)).

This sequence belongs to the TRAFAC class TrmE-Era-EngA-EngB-Septin-like GTPase superfamily. EngA (Der) GTPase family. As to quaternary structure, associates with the 50S ribosomal subunit.

In terms of biological role, GTPase that plays an essential role in the late steps of ribosome biogenesis. In Synechococcus sp. (strain CC9605), this protein is GTPase Der.